The chain runs to 678 residues: Alpha-L-arabinofuranosidase 1 (678 aa).

Positions 1 to 33 are cleaved as a signal peptide; sequence MDMESWKLLRSVCVLSFLLGSCFVYQSLRVVDA. One can recognise a CBM-cenC domain in the interval 152–239; that stretch reads NIEEGKKYKV…WIDQVSAMPV (88 aa). Residues Asn-181, Asn-362, Asn-523, and Asn-555 are each glycosylated (N-linked (GlcNAc...) asparagine).

It belongs to the glycosyl hydrolase 51 family. As to expression, expressed in roots, leaves, flowers, stems, siliques and seedlings. Observed in zones of cell proliferation, the vascular system and floral abscission zones. Expressed in the guard cells in stems, in xylem vessels and parenchyma cells surrounding the vessels, in the cambium and in the phloem, but not in the secondary xylem.

It localises to the secreted. It is found in the extracellular space. Its subcellular location is the extracellular matrix. It catalyses the reaction Hydrolysis of terminal non-reducing alpha-L-arabinofuranoside residues in alpha-L-arabinosides.. In terms of biological role, may be involved in the coordinated dissolution of the cell wall matrix during abscission and in the secondary cell wall formation in xylem vessels. Prefers arabinoxylan, but may also use pectic arabinans as substrates. The protein is Alpha-L-arabinofuranosidase 1 (ASD1) of Arabidopsis thaliana (Mouse-ear cress).